A 103-amino-acid chain; its full sequence is Photosystem II 5 kDa protein, chloroplastic (103 aa).

The N-terminal 75 residues, 1–75 (MASMTMTATF…LAKVAMAEEE (75 aa)), are a transit peptide targeting the chloroplast.

Post-translationally, the maturation of the PSII-T precursor to its final form occurs through a two step process. First, a stromal intermediate is formed, which, upon translocation into the thylakoid membrane, is processed to the mature protein.

It is found in the plastid. It localises to the chloroplast thylakoid membrane. Its function is as follows. May be a component of the oxygen-evolving complex. This is Photosystem II 5 kDa protein, chloroplastic (PSBT) from Arabidopsis thaliana (Mouse-ear cress).